A 132-amino-acid polypeptide reads, in one-letter code: Riboflavin kinase (132 aa).

13-18 (GLGHGS) is a CDP binding site. Mg(2+) is bound by residues Thr40 and Asn42. FMN contacts are provided by Thr98 and Glu106. 111 to 114 (VYLR) contacts CDP.

Belongs to the archaeal riboflavin kinase family. Mg(2+) is required as a cofactor.

The enzyme catalyses riboflavin + CTP = CDP + FMN + H(+). It functions in the pathway cofactor biosynthesis; FMN biosynthesis; FMN from riboflavin (CTP route): step 1/1. In terms of biological role, catalyzes the CTP-dependent phosphorylation of riboflavin (vitamin B2) to form flavin mononucleotide (FMN). This Aeropyrum pernix (strain ATCC 700893 / DSM 11879 / JCM 9820 / NBRC 100138 / K1) protein is Riboflavin kinase.